The following is a 266-amino-acid chain: Hydroxyethylthiazole kinase (266 aa).

Substrate is bound at residue Met46. The ATP site is built by Arg122 and Ser168. Residue Gly195 coordinates substrate.

This sequence belongs to the Thz kinase family. It depends on Mg(2+) as a cofactor.

The catalysed reaction is 5-(2-hydroxyethyl)-4-methylthiazole + ATP = 4-methyl-5-(2-phosphooxyethyl)-thiazole + ADP + H(+). Its pathway is cofactor biosynthesis; thiamine diphosphate biosynthesis; 4-methyl-5-(2-phosphoethyl)-thiazole from 5-(2-hydroxyethyl)-4-methylthiazole: step 1/1. Its function is as follows. Catalyzes the phosphorylation of the hydroxyl group of 4-methyl-5-beta-hydroxyethylthiazole (THZ). This Oleidesulfovibrio alaskensis (strain ATCC BAA-1058 / DSM 17464 / G20) (Desulfovibrio alaskensis) protein is Hydroxyethylthiazole kinase.